A 78-amino-acid polypeptide reads, in one-letter code: MSRVCQVTGKRPVVGNNRSHAMNATKRRFLPNLHTHRFWVESENRFVTLRLTAKGMRIIDKKGIDAVLAEIRARGEKI.

It belongs to the bacterial ribosomal protein bL28 family.

The sequence is that of Large ribosomal subunit protein bL28 from Glaesserella parasuis serovar 5 (strain SH0165) (Haemophilus parasuis).